Consider the following 338-residue polypeptide: Ketol-acid reductoisomerase (NADP(+)) (338 aa).

The KARI N-terminal Rossmann domain maps to 3-183 (IDVFYDDDAD…GGARAGVIPT (181 aa)). Residues 26–29 (YGSQ), arginine 49, serine 52, serine 54, and 84–87 (DTSQ) contribute to the NADP(+) site. Histidine 109 is a catalytic residue. Glycine 135 serves as a coordination point for NADP(+). In terms of domain architecture, KARI C-terminal knotted spans 184-329 (TFEAETVTDL…AKLRDLMSWV (146 aa)). Mg(2+) contacts are provided by aspartate 192, glutamate 196, glutamate 228, and glutamate 232. Substrate is bound at residue serine 253.

The protein belongs to the ketol-acid reductoisomerase family. Requires Mg(2+) as cofactor.

It carries out the reaction (2R)-2,3-dihydroxy-3-methylbutanoate + NADP(+) = (2S)-2-acetolactate + NADPH + H(+). It catalyses the reaction (2R,3R)-2,3-dihydroxy-3-methylpentanoate + NADP(+) = (S)-2-ethyl-2-hydroxy-3-oxobutanoate + NADPH + H(+). It participates in amino-acid biosynthesis; L-isoleucine biosynthesis; L-isoleucine from 2-oxobutanoate: step 2/4. The protein operates within amino-acid biosynthesis; L-valine biosynthesis; L-valine from pyruvate: step 2/4. In terms of biological role, involved in the biosynthesis of branched-chain amino acids (BCAA). Catalyzes an alkyl-migration followed by a ketol-acid reduction of (S)-2-acetolactate (S2AL) to yield (R)-2,3-dihydroxy-isovalerate. In the isomerase reaction, S2AL is rearranged via a Mg-dependent methyl migration to produce 3-hydroxy-3-methyl-2-ketobutyrate (HMKB). In the reductase reaction, this 2-ketoacid undergoes a metal-dependent reduction by NADPH to yield (R)-2,3-dihydroxy-isovalerate. This Corynebacterium jeikeium (strain K411) protein is Ketol-acid reductoisomerase (NADP(+)).